Consider the following 63-residue polypeptide: 2-hydroxymuconate tautomerase (63 aa).

The Proton acceptor; via imino nitrogen role is filled by Pro2.

This sequence belongs to the 4-oxalocrotonate tautomerase family. In terms of assembly, homohexamer.

It carries out the reaction (2Z,4E)-2-hydroxyhexa-2,4-dienedioate = (3E)-2-oxohex-3-enedioate. It participates in aromatic compound metabolism; salicylate degradation. In terms of biological role, catalyzes the ketonization of 2-hydroxymuconate stereoselectively to yield 2-oxo-3-hexenedioate. This Pseudomonas putida (Arthrobacter siderocapsulatus) protein is 2-hydroxymuconate tautomerase (nahJ).